We begin with the raw amino-acid sequence, 700 residues long: Myotubularin-related protein 11 (700 aa).

Residues 1 to 39 (MWWGGRGQSFNIAPQKEEPEMGLSGPKSNPGNRMPEPSS) are disordered. Residues 201–644 (LETLEDWETE…PQIRFWKRCY (444 aa)) enclose the Myotubularin phosphatase domain.

Belongs to the protein-tyrosine phosphatase family. Non-receptor class myotubularin subfamily.

The polypeptide is Myotubularin-related protein 11 (Mtmr11) (Mus musculus (Mouse)).